The sequence spans 133 residues: ATP synthase epsilon chain (133 aa).

This sequence belongs to the ATPase epsilon chain family. F-type ATPases have 2 components, CF(1) - the catalytic core - and CF(0) - the membrane proton channel. CF(1) has five subunits: alpha(3), beta(3), gamma(1), delta(1), epsilon(1). CF(0) has three main subunits: a, b and c.

Its subcellular location is the cell membrane. Produces ATP from ADP in the presence of a proton gradient across the membrane. This is ATP synthase epsilon chain from Clostridium botulinum (strain 657 / Type Ba4).